The following is a 78-amino-acid chain: UPF0235 protein AF_2072 (78 aa).

It belongs to the UPF0235 family.

This is UPF0235 protein AF_2072 from Archaeoglobus fulgidus (strain ATCC 49558 / DSM 4304 / JCM 9628 / NBRC 100126 / VC-16).